The following is a 321-amino-acid chain: CRISPR-associated aCascade subunit Cas7/Csa2 2 (321 aa).

Belongs to the CRISPR-associated protein Cas7/Cst2/DevR family. Subtype I-a/Apern subfamily. In terms of assembly, part of the aCascade ribonucleoprotein complex, minimally composed of Csa2 and Cas5a, which binds crRNA. Other possible components of aCascade in strain P1 are Cas6b (SSO1437) and Csa5 (SSO1443), while SSO1399, Cas5b (SSO1400) and SSO1401 have sometimes been seen weakly associated. Csa2 is probably the major RNA-binding subunit. The Csa2-Cas5a-crRNA complex also binds target DNA homologous to crRNA, probably forming an R-loop. Purified aCascade forms a filament about 6 nm in width.

Functionally, CRISPR (clustered regularly interspaced short palindromic repeat) is an adaptive immune system that provides protection against mobile genetic elements (viruses, transposable elements and conjugative plasmids). CRISPR clusters contain spacers, sequences complementary to antecedent mobile elements, and target invading nucleic acids. CRISPR clusters are transcribed and processed into CRISPR RNA (crRNA). The protein is CRISPR-associated aCascade subunit Cas7/Csa2 2 (csa2b) of Saccharolobus solfataricus (strain ATCC 35092 / DSM 1617 / JCM 11322 / P2) (Sulfolobus solfataricus).